The primary structure comprises 407 residues: GTPase Obg (407 aa).

The Obg domain occupies 1–159; it reads MKFVDEVSIR…RDLKLEMKVL (159 aa). Residues 128-148 form a disordered region; sequence TRFKSSTNRAPRQTTPGKPGE. A compositionally biased stretch (polar residues) spans 129–143; that stretch reads RFKSSTNRAPRQTTP. The OBG-type G domain maps to 160–333; that stretch reads ADVGLLGLPN…LTRDIMRYLE (174 aa). Residues 166–173, 191–195, 213–216, 283–286, and 314–316 each bind GTP; these read GLPNAGKS, FTTLV, DIPG, NKCD, and SAI. Mg(2+)-binding residues include Ser173 and Thr193. Residues 376–407 are disordered; sequence SGVKSVHDIGDDDWDEEDVDDEDGPEIIYVRD. Residues 385–400 show a composition bias toward acidic residues; that stretch reads GDDDWDEEDVDDEDGP.

Belongs to the TRAFAC class OBG-HflX-like GTPase superfamily. OBG GTPase family. Monomer. Mg(2+) serves as cofactor.

It localises to the cytoplasm. An essential GTPase which binds GTP, GDP and possibly (p)ppGpp with moderate affinity, with high nucleotide exchange rates and a fairly low GTP hydrolysis rate. Plays a role in control of the cell cycle, stress response, ribosome biogenesis and in those bacteria that undergo differentiation, in morphogenesis control. In Pseudomonas fluorescens (strain Pf0-1), this protein is GTPase Obg.